A 307-amino-acid polypeptide reads, in one-letter code: Ribosomal RNA small subunit methyltransferase H (307 aa).

S-adenosyl-L-methionine-binding positions include glycine 31–histidine 33, aspartate 51, tyrosine 83, aspartate 97, and glutamine 104.

Belongs to the methyltransferase superfamily. RsmH family.

It localises to the cytoplasm. It catalyses the reaction cytidine(1402) in 16S rRNA + S-adenosyl-L-methionine = N(4)-methylcytidine(1402) in 16S rRNA + S-adenosyl-L-homocysteine + H(+). Its function is as follows. Specifically methylates the N4 position of cytidine in position 1402 (C1402) of 16S rRNA. This chain is Ribosomal RNA small subunit methyltransferase H, found in Buchnera aphidicola subsp. Cinara cedri (strain Cc).